The primary structure comprises 96 residues: Co-chaperonin GroES (96 aa).

This sequence belongs to the GroES chaperonin family. As to quaternary structure, heptamer of 7 subunits arranged in a ring. Interacts with the chaperonin GroEL.

The protein resides in the cytoplasm. In terms of biological role, together with the chaperonin GroEL, plays an essential role in assisting protein folding. The GroEL-GroES system forms a nano-cage that allows encapsulation of the non-native substrate proteins and provides a physical environment optimized to promote and accelerate protein folding. GroES binds to the apical surface of the GroEL ring, thereby capping the opening of the GroEL channel. In Methylibium petroleiphilum (strain ATCC BAA-1232 / LMG 22953 / PM1), this protein is Co-chaperonin GroES.